The chain runs to 328 residues: L-lactate dehydrogenase (328 aa).

NAD(+)-binding positions include Val18, Glu39, Lys46, Tyr71, and 85 to 86; that span reads GA. Gln88 and Arg94 together coordinate substrate. Residues Ser107, 124 to 126, and Ser149 contribute to the NAD(+) site; that span reads AAN. 126-129 is a binding site for substrate; the sequence is NPVD. 154–157 is a substrate binding site; sequence DTAR. The beta-D-fructose 1,6-bisphosphate site is built by Arg159 and His174. His181 functions as the Proton acceptor in the catalytic mechanism. A Phosphotyrosine modification is found at Tyr226. Thr235 provides a ligand contact to substrate.

Belongs to the LDH/MDH superfamily. LDH family. Homotetramer.

The protein localises to the cytoplasm. It catalyses the reaction (S)-lactate + NAD(+) = pyruvate + NADH + H(+). It participates in fermentation; pyruvate fermentation to lactate; (S)-lactate from pyruvate: step 1/1. Allosterically activated by fructose 1,6-bisphosphate (FBP). In terms of biological role, catalyzes the conversion of lactate to pyruvate. This chain is L-lactate dehydrogenase, found in Streptococcus mutans serotype c (strain ATCC 700610 / UA159).